Consider the following 163-residue polypeptide: Regulatory protein RecX (163 aa).

The disordered stretch occupies residues 1–21 (MSDAEDIPTGRKRRPREQTPV).

It belongs to the RecX family.

The protein resides in the cytoplasm. Modulates RecA activity. The sequence is that of Regulatory protein RecX from Stenotrophomonas maltophilia (strain K279a).